Here is a 518-residue protein sequence, read N- to C-terminus: Protein nucleotidyltransferase YdiU (518 aa).

G99, G101, R102, K122, D134, G135, R192, and R199 together coordinate ATP. Residue D270 is the Proton acceptor of the active site. Positions 271 and 280 each coordinate Mg(2+). D280 is an ATP binding site.

Belongs to the SELO family. Mg(2+) is required as a cofactor. It depends on Mn(2+) as a cofactor.

The enzyme catalyses L-seryl-[protein] + ATP = 3-O-(5'-adenylyl)-L-seryl-[protein] + diphosphate. The catalysed reaction is L-threonyl-[protein] + ATP = 3-O-(5'-adenylyl)-L-threonyl-[protein] + diphosphate. It carries out the reaction L-tyrosyl-[protein] + ATP = O-(5'-adenylyl)-L-tyrosyl-[protein] + diphosphate. It catalyses the reaction L-histidyl-[protein] + UTP = N(tele)-(5'-uridylyl)-L-histidyl-[protein] + diphosphate. The enzyme catalyses L-seryl-[protein] + UTP = O-(5'-uridylyl)-L-seryl-[protein] + diphosphate. The catalysed reaction is L-tyrosyl-[protein] + UTP = O-(5'-uridylyl)-L-tyrosyl-[protein] + diphosphate. Functionally, nucleotidyltransferase involved in the post-translational modification of proteins. It can catalyze the addition of adenosine monophosphate (AMP) or uridine monophosphate (UMP) to a protein, resulting in modifications known as AMPylation and UMPylation. The protein is Protein nucleotidyltransferase YdiU of Methylobacillus flagellatus (strain ATCC 51484 / DSM 6875 / VKM B-1610 / KT).